Reading from the N-terminus, the 96-residue chain is Small ribosomal subunit protein bS6 (96 aa).

This sequence belongs to the bacterial ribosomal protein bS6 family.

Its function is as follows. Binds together with bS18 to 16S ribosomal RNA. The polypeptide is Small ribosomal subunit protein bS6 (Streptococcus thermophilus (strain ATCC BAA-250 / LMG 18311)).